The chain runs to 314 residues: Ecto-ADP-ribosyltransferase 4 (314 aa).

Positions Met1 to Gly46 are cleaved as a signal peptide. Intrachain disulfides connect Cys69/Cys280 and Cys182/Cys231. The region spanning Lys91 to Ser276 is the TR mART core domain. Asn114 carries N-linked (GlcNAc...) asparagine glycosylation. Tyr126 lines the NAD(+) pocket. N-linked (GlcNAc...) asparagine glycosylation is present at Asn178. Gln206 contacts NAD(+). N-linked (GlcNAc...) asparagine glycosylation occurs at Asn222. An NAD(+)-binding site is contributed by Ser240. Asn257 and Asn274 each carry an N-linked (GlcNAc...) asparagine glycan. Ala285 carries GPI-anchor amidated alanine lipidation. Positions Ser286–Val314 are cleaved as a propeptide — removed in mature form.

The protein belongs to the Arg-specific ADP-ribosyltransferase family.

The protein resides in the cell membrane. It catalyses the reaction L-arginyl-[protein] + NAD(+) = N(omega)-(ADP-D-ribosyl)-L-arginyl-[protein] + nicotinamide + H(+). The chain is Ecto-ADP-ribosyltransferase 4 (ART4) from Pan troglodytes (Chimpanzee).